A 561-amino-acid polypeptide reads, in one-letter code: Asparagine synthetase [glutamine-hydrolyzing] (561 aa).

The active-site For GATase activity is Cys2. The Glutamine amidotransferase type-2 domain maps to 2–191; that stretch reads CGIWALFGSD…PGHYEVLDLK (190 aa). Residues 49 to 53, 75 to 77, and Asp97 each bind L-glutamine; these read RLAVV and NGE. One can recognise an Asparagine synthetase domain in the interval 213–536; sequence HALYDNVEKL…PGRADWLSHY (324 aa). ATP-binding positions include Leu256, Ile288, and 363 to 364; that span reads SG. An N6-acetyllysine modification is found at Lys385. Thr545 carries the phosphothreonine modification. Residue Ser557 is modified to Phosphoserine.

It catalyses the reaction L-aspartate + L-glutamine + ATP + H2O = L-asparagine + L-glutamate + AMP + diphosphate + H(+). The protein operates within amino-acid biosynthesis; L-asparagine biosynthesis; L-asparagine from L-aspartate (L-Gln route): step 1/1. This chain is Asparagine synthetase [glutamine-hydrolyzing] (ASNS), found in Homo sapiens (Human).